The chain runs to 393 residues: NAD(P)H-quinone oxidoreductase subunit H, chloroplastic (393 aa).

Belongs to the complex I 49 kDa subunit family. As to quaternary structure, NDH is composed of at least 16 different subunits, 5 of which are encoded in the nucleus.

It localises to the plastid. Its subcellular location is the chloroplast thylakoid membrane. It carries out the reaction a plastoquinone + NADH + (n+1) H(+)(in) = a plastoquinol + NAD(+) + n H(+)(out). It catalyses the reaction a plastoquinone + NADPH + (n+1) H(+)(in) = a plastoquinol + NADP(+) + n H(+)(out). In terms of biological role, NDH shuttles electrons from NAD(P)H:plastoquinone, via FMN and iron-sulfur (Fe-S) centers, to quinones in the photosynthetic chain and possibly in a chloroplast respiratory chain. The immediate electron acceptor for the enzyme in this species is believed to be plastoquinone. Couples the redox reaction to proton translocation, and thus conserves the redox energy in a proton gradient. This is NAD(P)H-quinone oxidoreductase subunit H, chloroplastic from Pelargonium hortorum (Common geranium).